The sequence spans 574 residues: Proline--tRNA ligase (574 aa).

Belongs to the class-II aminoacyl-tRNA synthetase family. ProS type 1 subfamily. Homodimer.

It localises to the cytoplasm. The catalysed reaction is tRNA(Pro) + L-proline + ATP = L-prolyl-tRNA(Pro) + AMP + diphosphate. Functionally, catalyzes the attachment of proline to tRNA(Pro) in a two-step reaction: proline is first activated by ATP to form Pro-AMP and then transferred to the acceptor end of tRNA(Pro). As ProRS can inadvertently accommodate and process non-cognate amino acids such as alanine and cysteine, to avoid such errors it has two additional distinct editing activities against alanine. One activity is designated as 'pretransfer' editing and involves the tRNA(Pro)-independent hydrolysis of activated Ala-AMP. The other activity is designated 'posttransfer' editing and involves deacylation of mischarged Ala-tRNA(Pro). The misacylated Cys-tRNA(Pro) is not edited by ProRS. The sequence is that of Proline--tRNA ligase from Aeromonas hydrophila subsp. hydrophila (strain ATCC 7966 / DSM 30187 / BCRC 13018 / CCUG 14551 / JCM 1027 / KCTC 2358 / NCIMB 9240 / NCTC 8049).